Here is a 375-residue protein sequence, read N- to C-terminus: Growth/differentiation factor 8 (375 aa).

The N-terminal stretch at 1 to 18 (MQKLQIFVYIYLFMLTVA) is a signal peptide. Positions 19 to 266 (GPVDLNENSE…VTDTPKRARR (248 aa)) are excised as a propeptide. N-linked (GlcNAc...) asparagine glycosylation is found at N48 and N71. Disulfide bonds link C272–C282, C281–C340, C309–C372, and C313–C374.

Belongs to the TGF-beta family. Homodimer; disulfide-linked. Interacts with WFIKKN2, leading to inhibit its activity. Interacts with FSTL3. In terms of processing, synthesized as large precursor molecule that undergoes proteolytic cleavage to generate an N-terminal propeptide and a disulfide linked C-terminal dimer, which is the biologically active molecule. The circulating form consists of a latent complex of the C-terminal dimer and other proteins, including its propeptide, which maintain the C-terminal dimer in a latent, inactive state. Ligand activation requires additional cleavage of the prodomain by a tolloid-like metalloproteinase.

Its subcellular location is the secreted. Acts specifically as a negative regulator of skeletal muscle growth. The protein is Growth/differentiation factor 8 (MSTN) of Sylvicapra grimmia (Grey duiker).